Here is a 290-residue protein sequence, read N- to C-terminus: 4-hydroxybenzoate octaprenyltransferase (290 aa).

A run of 8 helical transmembrane segments spans residues Ile24 to Ile44, Val48 to Asn68, Leu98 to Ile118, Phe142 to Ile162, Trp171 to Ile191, Phe214 to Glu234, Val239 to Ile259, and Ala270 to His290.

Belongs to the UbiA prenyltransferase family. Requires Mg(2+) as cofactor.

Its subcellular location is the cell inner membrane. It catalyses the reaction all-trans-octaprenyl diphosphate + 4-hydroxybenzoate = 4-hydroxy-3-(all-trans-octaprenyl)benzoate + diphosphate. It participates in cofactor biosynthesis; ubiquinone biosynthesis. Functionally, catalyzes the prenylation of para-hydroxybenzoate (PHB) with an all-trans polyprenyl group. Mediates the second step in the final reaction sequence of ubiquinone-8 (UQ-8) biosynthesis, which is the condensation of the polyisoprenoid side chain with PHB, generating the first membrane-bound Q intermediate 3-octaprenyl-4-hydroxybenzoate. This chain is 4-hydroxybenzoate octaprenyltransferase, found in Blochmanniella pennsylvanica (strain BPEN).